Consider the following 416-residue polypeptide: MKAKSMKSIISVPISVSKTGKMKLTASPDNLASMMSKDQNKLIHLDPVPSFEDRHEIKPWLQKIFYPQGIDIVIERSDSSKVTFKCRSVRSKVGLNPKSKGSSSRSHACPFRIRAAYSVRLQKWNVVVMNNIHSHELRFDLITKTDDYKKFKENLRQKNDEKAIKTFDELEYKASLNLPLVTPIISCDCGLTKEIEAFNNIFLPLSNPPLTSKKNLLKTNKNSVSKIKSRQMDNSKPRPRLKTKLDADLHDTGFLDNFKTRNSCVKIEKEDSLTNLNEIDFTNMFCNDNFIQNYNQGLMELLTEPTPGPSSSSCILPSTPTRPLSQSKMDIALSESTTSSPNFMETDAPYGDEIIKVSKDTKSNAPTADTDIATNLGKERNENFGMLNYNYEALLHFNDEHFNELNSIDPALISKY.

Residue D53 coordinates Zn(2+). R54, H55, K58, I74, E75, R76, S77, D78, and K81 together coordinate DNA. Residue H55 participates in Zn(2+) binding. Position 86 (C86) interacts with Zn(2+). A DNA-binding site is contributed by S88. C109 contacts Zn(2+). V119 and R120 together coordinate DNA. Residues H133 and H135 each coordinate Zn(2+). Positions 157 and 159 each coordinate DNA. A CDC [2Fe-2S] cluster binding motif motif is present at residues 187 to 189 (CDC).

In terms of assembly, homodimer. Dimerization decreases the DNA-binding activity.

The protein resides in the nucleus. Its activity is regulated as follows. Dimerization via the binding of Fe(2+) or a [2Fe-2S] cluster decreases the DNA-binding activity. Functionally, transcription factor required for iron homeostasis and resistance to oxidative stress. With AFT1, activates the gene expression in response to low-iron conditions, also called iron regulon. Recognizes the consensus iron-responsive element (Fe-RE) sequence 5'-CACCC-3' in the promoters of target genes. The transcription activation by AFT1 and AFT2 depends on the mitochondrial iron-sulfur protein biosynthesis pathway. In high iron condition, the presence of iron leads to dimerization, which in turn leads to a decrease in DNA affinity. In Saccharomyces cerevisiae (strain ATCC 204508 / S288c) (Baker's yeast), this protein is Iron-regulated transcriptional activator AFT2.